Reading from the N-terminus, the 373-residue chain is P2Y purinoceptor 1 (373 aa).

At 1 to 51 (MTEVLWPAAPNGTDAAFLASPGFHWGNSTATSTAAAAAPFRCALTKTGFQF) the chain is on the extracellular side. N-linked (GlcNAc...) asparagine glycosylation is found at N11 and N27. Cystine bridges form between C42-C296 and C124-C202. K46 is an ADP binding site. A helical membrane pass occupies residues 52-74 (YYLPAVYIVVFIIGFLGNSIAIW). At 75-87 (MFVFHMKPWSGIS) the chain is on the cytoplasmic side. Residues 88–109 (VYMFNLALADFLYVLTLPALIF) form a helical membrane-spanning segment. Residues 110–125 (YYFNKTNWIFGDAMCK) lie on the Extracellular side of the membrane. The N-linked (GlcNAc...) asparagine glycan is linked to N113. Residues 126-147 (LQRFIFHVNLYGSILFLTCISA) traverse the membrane as a helical segment. At 148–166 (HRYSGVVYPLKSLGRLKKK) the chain is on the cytoplasmic side. Residues 167-188 (NAVYISVLVWLIVVVAISPILF) form a helical membrane-spanning segment. At 189–214 (YSGTGIRKNKTITCYDTTSDEYLRSY) the chain is on the extracellular side. N-linked (GlcNAc...) asparagine glycosylation is present at N197. 203-205 (YDT) contacts ADP. Residues 215 to 237 (FIYSMCTTVAMFCVPLVLILGCY) traverse the membrane as a helical segment. At 238-260 (GLIVRALIYKDLDNSPLRRKSIY) the chain is on the cytoplasmic side. The helical transmembrane segment at 261–284 (LVIIVLTVFAVSYIPFHVMKTMNL) threads the bilayer. ADP contacts are provided by residues 283–287 (NLRAR), 303–306 (YATY), and R310. Residues 285 to 303 (RARLDFQTPEMCTFNDRVY) are Extracellular-facing. Residues 304 to 325 (ATYQVTRGLASLNSCVDPILYF) traverse the membrane as a helical segment. Residues 326 to 373 (LAGDTFRRRLSRATRKASRRSEANLQSKSEDMTLNILSEFKQNGDTSL) lie on the Cytoplasmic side of the membrane.

It belongs to the G-protein coupled receptor 1 family.

It is found in the cell membrane. Functionally, receptor for extracellular adenine nucleotides such as ADP. In platelets, binding to ADP leads to mobilization of intracellular calcium ions via activation of phospholipase C, a change in platelet shape, and ultimately platelet aggregation. This Cavia porcellus (Guinea pig) protein is P2Y purinoceptor 1 (P2RY1).